The primary structure comprises 232 residues: tRNA pseudouridine synthase B (232 aa).

D53 functions as the Nucleophile in the catalytic mechanism.

Belongs to the pseudouridine synthase TruB family. Type 1 subfamily.

It carries out the reaction uridine(55) in tRNA = pseudouridine(55) in tRNA. In terms of biological role, responsible for synthesis of pseudouridine from uracil-55 in the psi GC loop of transfer RNAs. The chain is tRNA pseudouridine synthase B from Malacoplasma penetrans (strain HF-2) (Mycoplasma penetrans).